The primary structure comprises 208 residues: Ciliary-associated calcium-binding coiled-coil protein 1 (208 aa).

Testis-specific. Expressed in spermatocytes and round spermatids (at protein level).

The protein localises to the cytoplasm. It localises to the cytoskeleton. The protein resides in the microtubule organizing center. It is found in the centrosome. Its subcellular location is the cell projection. The protein localises to the cilium. It localises to the flagellum. Calcium-binding protein. May be involved in the control of sperm flagellar movement. The polypeptide is Ciliary-associated calcium-binding coiled-coil protein 1 (Mus musculus (Mouse)).